The chain runs to 247 residues: Probable transcriptional regulatory protein ABO_0750 (247 aa).

Belongs to the TACO1 family.

It is found in the cytoplasm. The protein is Probable transcriptional regulatory protein ABO_0750 of Alcanivorax borkumensis (strain ATCC 700651 / DSM 11573 / NCIMB 13689 / SK2).